The chain runs to 297 residues: N-acetylneuraminate lyase (297 aa).

S47 and T48 together coordinate aceneuramate. Y137 (proton donor) is an active-site residue. Residue K165 is the Schiff-base intermediate with substrate of the active site. Aceneuramate is bound by residues T167, G189, D191, E192, and S208.

This sequence belongs to the DapA family. NanA subfamily. As to quaternary structure, homotetramer.

The protein resides in the cytoplasm. It catalyses the reaction aceneuramate = aldehydo-N-acetyl-D-mannosamine + pyruvate. The protein operates within amino-sugar metabolism; N-acetylneuraminate degradation; D-fructose 6-phosphate from N-acetylneuraminate: step 1/5. In terms of biological role, catalyzes the reversible aldol cleavage of N-acetylneuraminic acid (sialic acid; Neu5Ac) to form pyruvate and N-acetylmannosamine (ManNAc) via a Schiff base intermediate. The polypeptide is N-acetylneuraminate lyase (Escherichia fergusonii (strain ATCC 35469 / DSM 13698 / CCUG 18766 / IAM 14443 / JCM 21226 / LMG 7866 / NBRC 102419 / NCTC 12128 / CDC 0568-73)).